The following is an 827-amino-acid chain: Lon protease (827 aa).

Residues 38 to 233 (LTLLASKYNV…VLLKYLLKDL (196 aa)) enclose the Lon N-terminal domain. 384-391 (GPPGVGKT) is a binding site for ATP. Residues 619 to 800 (THLPGVAIGL…EEVIQLALQP (182 aa)) form the Lon proteolytic domain. Residues Ser706 and Lys749 contribute to the active site.

It belongs to the peptidase S16 family. Homohexamer. Organized in a ring with a central cavity.

Its subcellular location is the cytoplasm. It carries out the reaction Hydrolysis of proteins in presence of ATP.. Functionally, ATP-dependent serine protease that mediates the selective degradation of mutant and abnormal proteins as well as certain short-lived regulatory proteins. Required for cellular homeostasis and for survival from DNA damage and developmental changes induced by stress. Degrades polypeptides processively to yield small peptide fragments that are 5 to 10 amino acids long. Binds to DNA in a double-stranded, site-specific manner. The polypeptide is Lon protease (Amoebophilus asiaticus (strain 5a2)).